The following is a 356-amino-acid chain: Alanine racemase (356 aa).

The active-site Proton acceptor; specific for D-alanine is K35. K35 is modified (N6-(pyridoxal phosphate)lysine). A substrate-binding site is contributed by R130. Catalysis depends on Y253, which acts as the Proton acceptor; specific for L-alanine. A substrate-binding site is contributed by M301.

This sequence belongs to the alanine racemase family. Pyridoxal 5'-phosphate is required as a cofactor.

It carries out the reaction L-alanine = D-alanine. It participates in amino-acid biosynthesis; D-alanine biosynthesis; D-alanine from L-alanine: step 1/1. In terms of biological role, catalyzes the interconversion of L-alanine and D-alanine. May also act on other amino acids. The chain is Alanine racemase (alr) from Paraburkholderia phytofirmans (strain DSM 17436 / LMG 22146 / PsJN) (Burkholderia phytofirmans).